The primary structure comprises 314 residues: tRNA pseudouridine synthase B (314 aa).

Position 43 (His-43) interacts with substrate. The Nucleophile role is filled by Asp-48. Substrate is bound by residues Tyr-76, Tyr-179, and Leu-200.

It belongs to the pseudouridine synthase TruB family. Type 1 subfamily.

It carries out the reaction uridine(55) in tRNA = pseudouridine(55) in tRNA. In terms of biological role, responsible for synthesis of pseudouridine from uracil-55 in the psi GC loop of transfer RNAs. In Shigella flexneri, this protein is tRNA pseudouridine synthase B.